The primary structure comprises 178 residues: MSRIGKKPVVIPAGVTVTVENSTVTVKGPKGELTREFNPTMAINVEGNELTVTRPNDEKANRTIHGTTRALIANMVEGVNNGFAKTLDIQGVGYRAQKQGNKIVLNLGYSHPIEYTPEQGIEVEVPTNTQIIVRGISKERVGHVAALIRSYRQPEPYKGKGIRYSDEVVRRKEGKTGK.

Belongs to the universal ribosomal protein uL6 family. In terms of assembly, part of the 50S ribosomal subunit.

Functionally, this protein binds to the 23S rRNA, and is important in its secondary structure. It is located near the subunit interface in the base of the L7/L12 stalk, and near the tRNA binding site of the peptidyltransferase center. This is Large ribosomal subunit protein uL6 from Exiguobacterium sibiricum (strain DSM 17290 / CCUG 55495 / CIP 109462 / JCM 13490 / 255-15).